Here is a 287-residue protein sequence, read N- to C-terminus: 4-diphosphocytidyl-2-C-methyl-D-erythritol kinase (287 aa).

Residue Lys-14 is part of the active site. ATP is bound at residue 96–106 (PWGAGLGGGSS). Asp-138 is an active-site residue.

Belongs to the GHMP kinase family. IspE subfamily.

It catalyses the reaction 4-CDP-2-C-methyl-D-erythritol + ATP = 4-CDP-2-C-methyl-D-erythritol 2-phosphate + ADP + H(+). It participates in isoprenoid biosynthesis; isopentenyl diphosphate biosynthesis via DXP pathway; isopentenyl diphosphate from 1-deoxy-D-xylulose 5-phosphate: step 3/6. Functionally, catalyzes the phosphorylation of the position 2 hydroxy group of 4-diphosphocytidyl-2C-methyl-D-erythritol. The polypeptide is 4-diphosphocytidyl-2-C-methyl-D-erythritol kinase (Methylibium petroleiphilum (strain ATCC BAA-1232 / LMG 22953 / PM1)).